A 630-amino-acid polypeptide reads, in one-letter code: MTQNATSETLGFQAEVKQLLHLMIHSLYSNKEIFLRELVSNASDACDKLRFEAIDQPELLAGDSELAIRVSYDKAARTITIADNGIGLSREEAIANLGTIARSGTREFFSQLTGDKQKDAQLIGQFGVGFYSSFIVADRVSVLSRRAGSDEAIRWESDGQGEFSIASAEKATRGTDVVLHLRADEDEFLNGWKLREVLRRYSDHISLPILMRKEEWDADKDEQVTRDEWETVNQANALWTRSKSEISDEQYREFYKTVSHGFDEPLAWTHNRVEGRSEYTQLLYVPRQAPFDLWDRDARRGVKLYVKRVFIMDDAEQLLPAYLRFVRGVIDSADLPLNVSREILQESRDVRAIREGSAKRILSLLEDLAENRKDDYAVFWGEFGQVLKEGVGEDPSNQERIAKLLRFASTHAGDASQTTSLQDYLGRLKEGQDKIYYVTADSYSAASNSPHLEIFRKKGIEVLLLWDRVDEWMLSHLREFEGKSLVSVAKGGLDLADLADEEEKKKQTEVAESFKPLIERLQTALGEQVKEVRVTLRLVDSPACVVVGQNDLSPHLLRMLKAAGQEVPEVKPVLEINPEHALIARIRDVSDADFGAWAQLLLDQALLAEGAQIADPAAFVKRLNALLLKV.

The a; substrate-binding stretch occupies residues 1-341 (MTQNATSETL…SADLPLNVSR (341 aa)). The b stretch occupies residues 342–558 (EILQESRDVR…QNDLSPHLLR (217 aa)). Positions 559-630 (MLKAAGQEVP…KRLNALLLKV (72 aa)) are c.

The protein belongs to the heat shock protein 90 family. Homodimer.

The protein resides in the cytoplasm. In terms of biological role, molecular chaperone. Has ATPase activity. The polypeptide is Chaperone protein HtpG (Bordetella avium (strain 197N)).